The primary structure comprises 390 residues: Alkanesulfonate monooxygenase (390 aa).

The protein belongs to the SsuD family.

The enzyme catalyses an alkanesulfonate + FMNH2 + O2 = an aldehyde + FMN + sulfite + H2O + 2 H(+). Functionally, catalyzes the desulfonation of aliphatic sulfonates. The chain is Alkanesulfonate monooxygenase from Cupriavidus taiwanensis (strain DSM 17343 / BCRC 17206 / CCUG 44338 / CIP 107171 / LMG 19424 / R1) (Ralstonia taiwanensis (strain LMG 19424)).